Reading from the N-terminus, the 253-residue chain is Dof zinc finger protein DOF3.4 (253 aa).

The segment at 30 to 84 (LPCPRCDSSNTKFCYYNNYNFSQPRHFCKACRRYWTHGGTLRDVPVGGGTRKSAK) adopts a Dof-type zinc-finger fold. Zn(2+)-binding residues include cysteine 32, cysteine 35, cysteine 57, and cysteine 60. Residues 73–103 (VPVGGGTRKSAKRSRTCSNSSSSSVSGVVSN) form a disordered region. Positions 90–103 (SNSSSSSVSGVVSN) are enriched in low complexity.

As to quaternary structure, interacts with OBF4 or OBF5. In terms of tissue distribution, constitutively expressed in the whole plant.

It localises to the nucleus. In terms of biological role, transcription factor that binds specifically to a 5'-AA[AG]G-3' consensus core sequence. Enhances the DNA binding of OBF transcription factors to OCS elements. This Arabidopsis thaliana (Mouse-ear cress) protein is Dof zinc finger protein DOF3.4 (DOF3.4).